The following is a 511-amino-acid chain: MRWISRPGWPGHLLALAAGALTPLALAPFDYWPLAILSIALLYLGLRGLPARAALWRGWWYGFGAFGAGTSWIYVSIHDYGAASVPLASFLMLGFTAGVAFFFALPAWLWARCLRRDNAPLGDALAFAALWLALELFRSWFLTGFPWLYAGYSQLQGPLAGLVPVGGVWLSSFVIALSAALLVNLPRLFPHGASLLLALVLLLGPWAAGLYLKGHAWTHSAGEPLKVVAIQGNIAQELKWDPTQVRAQLDLYRDLSLPQQDVDLIVWPETAVPILKDMASGYLGAMGQVAADKKAALITGVPVRERLADGNSRYFNGITVVGEGAGTYLKQKLVPFGEYVPLQDLLRGLIAFFDLPMSDFARGPADQALLKAKGYEIAPYICYEVVYPEFAAALAAQSQVLLTVSNDTWFGTSIGPLQHLQMAQMRALESGRWMIRATNNGVTGLIDPYGRIVKQIPQFQQGILRGEVIPMQGLTPYLQYRVWPLAGLAGVLLLWALLGRRLRPQERRLFG.

Transmembrane regions (helical) follow at residues 7–25, 58–78, 90–110, 125–145, 163–183, and 192–212; these read PGWP…TPLA, GWWY…VSIH, FLML…AWLW, LAFA…LTGF, VPVG…ALLV, and GASL…GLYL. One can recognise a CN hydrolase domain in the interval 230-470; the sequence is IQGNIAQELK…QGILRGEVIP (241 aa). E269 acts as the Proton acceptor in catalysis. K330 is an active-site residue. The active-site Nucleophile is C382. The helical transmembrane segment at 478-498 threads the bilayer; that stretch reads LQYRVWPLAGLAGVLLLWALL.

Belongs to the CN hydrolase family. Apolipoprotein N-acyltransferase subfamily.

It is found in the cell inner membrane. It catalyses the reaction N-terminal S-1,2-diacyl-sn-glyceryl-L-cysteinyl-[lipoprotein] + a glycerophospholipid = N-acyl-S-1,2-diacyl-sn-glyceryl-L-cysteinyl-[lipoprotein] + a 2-acyl-sn-glycero-3-phospholipid + H(+). It functions in the pathway protein modification; lipoprotein biosynthesis (N-acyl transfer). In terms of biological role, catalyzes the phospholipid dependent N-acylation of the N-terminal cysteine of apolipoprotein, the last step in lipoprotein maturation. This is Apolipoprotein N-acyltransferase from Pseudomonas paraeruginosa (strain DSM 24068 / PA7) (Pseudomonas aeruginosa (strain PA7)).